A 128-amino-acid polypeptide reads, in one-letter code: Large ribosomal subunit protein bL17 (128 aa).

This sequence belongs to the bacterial ribosomal protein bL17 family. As to quaternary structure, part of the 50S ribosomal subunit. Contacts protein L32.

This Klebsiella pneumoniae (strain 342) protein is Large ribosomal subunit protein bL17.